The following is a 238-amino-acid chain: 2,3,4,5-tetrahydropyridine-2,6-dicarboxylate N-acetyltransferase (238 aa).

It belongs to the transferase hexapeptide repeat family. DapH subfamily.

The catalysed reaction is (S)-2,3,4,5-tetrahydrodipicolinate + acetyl-CoA + H2O = L-2-acetamido-6-oxoheptanedioate + CoA. It participates in amino-acid biosynthesis; L-lysine biosynthesis via DAP pathway; LL-2,6-diaminopimelate from (S)-tetrahydrodipicolinate (acetylase route): step 1/3. Catalyzes the transfer of an acetyl group from acetyl-CoA to tetrahydrodipicolinate. The sequence is that of 2,3,4,5-tetrahydropyridine-2,6-dicarboxylate N-acetyltransferase from Thermotoga neapolitana (strain ATCC 49049 / DSM 4359 / NBRC 107923 / NS-E).